The chain runs to 195 residues: MGYIPYVIENTDRGERSYDIYSRLLKDRIVLLSGEINDSVASSIVAQLLFLEAEDPEKDIGLYINSPGGVITSGLSIYDTMNFIRPDVSTICIGQAASMGAFLLSCGAKGKRFSLPHSRIMIHQPLGGAQGQASDIEIISNEILRLKGLMNSILAQNSGQSLEQIAKDTDRDFYMSAKEAKEYGLIDKVLEKNVK.

Residue serine 98 is the Nucleophile of the active site. Residue histidine 123 is part of the active site.

It belongs to the peptidase S14 family. Fourteen ClpP subunits assemble into 2 heptameric rings which stack back to back to give a disk-like structure with a central cavity, resembling the structure of eukaryotic proteasomes.

It is found in the cytoplasm. It carries out the reaction Hydrolysis of proteins to small peptides in the presence of ATP and magnesium. alpha-casein is the usual test substrate. In the absence of ATP, only oligopeptides shorter than five residues are hydrolyzed (such as succinyl-Leu-Tyr-|-NHMec, and Leu-Tyr-Leu-|-Tyr-Trp, in which cleavage of the -Tyr-|-Leu- and -Tyr-|-Trp bonds also occurs).. In terms of biological role, cleaves peptides in various proteins in a process that requires ATP hydrolysis. Has a chymotrypsin-like activity. Plays a major role in the degradation of misfolded proteins. This is ATP-dependent Clp protease proteolytic subunit from Helicobacter pylori (strain Shi470).